A 511-amino-acid polypeptide reads, in one-letter code: Trafficking protein particle complex subunit 13 homolog (511 aa).

It belongs to the TRAPPC13 family.

The chain is Trafficking protein particle complex subunit 13 homolog from Dictyostelium discoideum (Social amoeba).